We begin with the raw amino-acid sequence, 509 residues long: DEAD-box ATP-dependent RNA helicase CshA (509 aa).

Residues 2–30 (QNFKELGISDKTVQTLEAMGFKEPTPIQK) carry the Q motif motif. A Helicase ATP-binding domain is found at 33 to 203 (IPYALEGDDI…QQFMKAPKII (171 aa)). ATP is bound at residue 46–53 (AQTGTGKT). A DEAD box motif is present at residues 150–153 (DEAD). The region spanning 214–375 (QIDEYYTIVK…LRPPHRKEVL (162 aa)) is the Helicase C-terminal domain. Composition is skewed to basic residues over residues 440 to 459 (ARKN…KRGN) and 467 to 482 (RRSK…KKNQ). The interval 440–509 (ARKNRSSKGG…KGRTFADHQK (70 aa)) is disordered. Over residues 483–492 (KKFDRRDKQQ) the composition is skewed to basic and acidic residues.

Belongs to the DEAD box helicase family. CshA subfamily. In terms of assembly, oligomerizes, may be a member of the RNA degradosome.

The protein localises to the cytoplasm. The enzyme catalyses ATP + H2O = ADP + phosphate + H(+). Its function is as follows. DEAD-box RNA helicase possibly involved in RNA degradation. Unwinds dsRNA in both 5'- and 3'-directions, has RNA-dependent ATPase activity. This is DEAD-box ATP-dependent RNA helicase CshA from Staphylococcus epidermidis (strain ATCC 35984 / DSM 28319 / BCRC 17069 / CCUG 31568 / BM 3577 / RP62A).